The primary structure comprises 331 residues: Eukaryotic translation initiation factor 3 subunit I (331 aa).

WD repeat units follow at residues 8 to 47 (LHER…RIGS), 49 to 88 (QCGG…QLDS), 142 to 181 (SPQC…LIKT), 184 to 223 (DHNK…LLRT), and 281 to 320 (GHIG…FEFD).

The protein belongs to the eIF-3 subunit I family. Component of the eukaryotic translation initiation factor 3 (eIF-3) complex.

The protein resides in the cytoplasm. Functionally, component of the eukaryotic translation initiation factor 3 (eIF-3) complex, which is involved in protein synthesis of a specialized repertoire of mRNAs and, together with other initiation factors, stimulates binding of mRNA and methionyl-tRNAi to the 40S ribosome. The eIF-3 complex specifically targets and initiates translation of a subset of mRNAs involved in cell proliferation. This is Eukaryotic translation initiation factor 3 subunit I (eif3I) from Dictyostelium discoideum (Social amoeba).